Here is a 295-residue protein sequence, read N- to C-terminus: Protease HtpX (295 aa).

Transmembrane regions (helical) follow at residues 5 to 25 (VILF…SMRL) and 43 to 63 (ALLI…LAIS). Position 148 (His-148) interacts with Zn(2+). The active site involves Glu-149. Zn(2+) is bound at residue His-152. 2 consecutive transmembrane segments (helical) span residues 159–179 (VTLA…ARII) and 198–218 (FFIT…LIVL). A Zn(2+)-binding site is contributed by Glu-225.

This sequence belongs to the peptidase M48B family. The cofactor is Zn(2+).

The protein resides in the cell inner membrane. This is Protease HtpX from Nitrosococcus oceani (strain ATCC 19707 / BCRC 17464 / JCM 30415 / NCIMB 11848 / C-107).